The primary structure comprises 585 residues: Glutamate decarboxylase 2 (585 aa).

Residues methionine 1–glycine 24 are disordered. Residues serine 3, serine 6, serine 10, and serine 13 each carry the phosphoserine modification. Residues cysteine 30 and cysteine 45 are each lipidated (S-palmitoyl cysteine). Glutamine 181–serine 183 lines the substrate pocket. Lysine 396 is subject to N6-(pyridoxal phosphate)lysine. Arginine 558 is a binding site for substrate.

The protein belongs to the group II decarboxylase family. As to quaternary structure, homodimer. It depends on pyridoxal 5'-phosphate as a cofactor. In terms of processing, phosphorylated; which does not affect kinetic parameters or subcellular location. Post-translationally, palmitoylated; which is required for presynaptic clustering.

Its subcellular location is the cytoplasm. It localises to the cytosol. The protein localises to the cytoplasmic vesicle. It is found in the presynaptic cell membrane. The protein resides in the golgi apparatus membrane. The enzyme catalyses L-glutamate + H(+) = 4-aminobutanoate + CO2. In terms of biological role, catalyzes the production of GABA. This is Glutamate decarboxylase 2 (Gad2) from Mus musculus (Mouse).